Reading from the N-terminus, the 37-residue chain is Cytochrome b6-f complex subunit 5 (37 aa).

Residues 5–25 (LLSGIVLGLMPVTLAGLFTTA) traverse the membrane as a helical segment.

It belongs to the PetG family. As to quaternary structure, the 4 large subunits of the cytochrome b6-f complex are cytochrome b6, subunit IV (17 kDa polypeptide, PetD), cytochrome f and the Rieske protein, while the 4 small subunits are PetG, PetL, PetM and PetN. The complex functions as a dimer.

Its subcellular location is the plastid. The protein resides in the chloroplast thylakoid membrane. Component of the cytochrome b6-f complex, which mediates electron transfer between photosystem II (PSII) and photosystem I (PSI), cyclic electron flow around PSI, and state transitions. PetG is required for either the stability or assembly of the cytochrome b6-f complex. This chain is Cytochrome b6-f complex subunit 5, found in Ostreococcus tauri.